We begin with the raw amino-acid sequence, 528 residues long: MDTQSDYVVVGTGSAGAVVASRLSTDPATTVVALEAGPRDKNRFIGVPAAFSKLFRSEIDWDYLTEPQPELDGREIYWPRGKVLGGSSSMNAMMWVRGFASDYDEWAARAGPRWSYADVLGYFRRIENVTAAWHFVSGDDSGVTGPLHISRQRSPRSVTAAWLAAARECGFAAARPNSPRPEGFCETVVTQRRGARFSTADAYLKPAMRRKNLRVLTGATATRVVIDGDRAVGVEYQSDGQTRIVYARREVVLCAGAVNSPQLLMLSGIGDRDHLAEHDIDTVYHAPEVGCNLLDHLVTVLGFDVEKDSLFAAEKPGQLISYLLRRRGMLTSNVGEAYGFVRSRPELKLPDLELIFAPAPFYDEALVPPAGHGVVFGPILVAPQSRGQITLRSADPHAKPVIEPRYLSDLGGVDRAAMMAGLRICARIAQARPLRDLLGSIARPRNSTELDEATLELALATCSHTLYHPMGTCRMGSDEASVVDPQLRVRGVDGLRVADASVMPSTVRGHTHAPSVLIGEKAADLIRS.

6–35 (DYVVVGTGSAGAVVASRLSTDPATTVVALE) is an FAD binding site. The active-site Proton acceptor is the His-468.

Belongs to the GMC oxidoreductase family. FAD serves as cofactor.

This is an uncharacterized protein from Mycobacterium bovis (strain ATCC BAA-935 / AF2122/97).